A 248-amino-acid chain; its full sequence is Triosephosphate isomerase (248 aa).

Residue Asn-9–Lys-11 coordinates substrate. His-94 serves as the catalytic Electrophile. Glu-166 functions as the Proton acceptor in the catalytic mechanism. Substrate-binding positions include Gly-172, Ser-211, and Gly-232–Gly-233.

It belongs to the triosephosphate isomerase family. In terms of assembly, homodimer.

The protein localises to the cytoplasm. It catalyses the reaction D-glyceraldehyde 3-phosphate = dihydroxyacetone phosphate. The protein operates within carbohydrate biosynthesis; gluconeogenesis. Its pathway is carbohydrate degradation; glycolysis; D-glyceraldehyde 3-phosphate from glycerone phosphate: step 1/1. Functionally, involved in the gluconeogenesis. Catalyzes stereospecifically the conversion of dihydroxyacetone phosphate (DHAP) to D-glyceraldehyde-3-phosphate (G3P). This is Triosephosphate isomerase from Vesicomyosocius okutanii subsp. Calyptogena okutanii (strain HA).